A 113-amino-acid polypeptide reads, in one-letter code: UPF0482 protein CKO_01577 (113 aa).

A signal peptide spans 1-28; sequence MNNTLSKRLCLTAMLALGAVVYTTSAFA. A disordered region spans residues 44–67; that stretch reads RQHAAMEKEQWNDTRSLRQKVNTR. A compositionally biased stretch (basic and acidic residues) spans 47–59; sequence AAMEKEQWNDTRS.

Belongs to the UPF0482 family.

In Citrobacter koseri (strain ATCC BAA-895 / CDC 4225-83 / SGSC4696), this protein is UPF0482 protein CKO_01577.